The following is a 401-amino-acid chain: ADP-forming sulfoacetate-CoA ligase subunit SqwK (401 aa).

The 209-residue stretch at 9 to 217 (KTVFSEHKIP…DNSVFRQPRF (209 aa)) folds into the ATP-grasp domain. 35–96 (KSVGFPSVVK…EEAVHIDKEI (62 aa)) is an ATP binding site. Positions 185 and 187 each coordinate Mg(2+).

Belongs to the succinate/malate CoA ligase beta subunit family. Forms a complex with SqwL. The cofactor is Mg(2+).

The enzyme catalyses sulfoacetate + ATP + CoA = sulfoacetyl-CoA + ADP + phosphate. In terms of biological role, part of a variant of the sulfo-TK pathway, a D-sulfoquinovose degradation pathway that produces sulfoacetate. Hydrolyzes sulfoacetyl-coenzyme A (sulfoacetyl-CoA) to produce sulfoacetate and CoA coupled with the phosphorylation of ADP to generate ATP. Cannot use succinate, acetate or 3-hydroxypropionate, and shows only residual activities with malonate and 3-sulfopropanoate. In Acholeplasma sp, this protein is ADP-forming sulfoacetate-CoA ligase subunit SqwK.